The primary structure comprises 227 residues: Cytochrome c oxidase subunit 2 (227 aa).

Residues 1-14 (MAYPFQLGLQDASS) lie on the Mitochondrial intermembrane side of the membrane. The chain crosses the membrane as a helical span at residues 15–45 (PIMEELTNFHDHTLMIVFLISSLVLYIISSM). Over 46 to 59 (LTTKMTHTSTMDAQ) the chain is Mitochondrial matrix. A helical membrane pass occupies residues 60–87 (EVETIWTVLPAVILILIALPSLRILYMM). The Mitochondrial intermembrane portion of the chain corresponds to 88–227 (DEINNPVLTV…HFENWSTSMI (140 aa)). The Cu cation site is built by H161, C196, E198, C200, H204, and M207. Mg(2+) is bound at residue E198.

Belongs to the cytochrome c oxidase subunit 2 family. In terms of assembly, component of the cytochrome c oxidase (complex IV, CIV), a multisubunit enzyme composed of 14 subunits. The complex is composed of a catalytic core of 3 subunits MT-CO1, MT-CO2 and MT-CO3, encoded in the mitochondrial DNA, and 11 supernumerary subunits COX4I, COX5A, COX5B, COX6A, COX6B, COX6C, COX7A, COX7B, COX7C, COX8 and NDUFA4, which are encoded in the nuclear genome. The complex exists as a monomer or a dimer and forms supercomplexes (SCs) in the inner mitochondrial membrane with NADH-ubiquinone oxidoreductase (complex I, CI) and ubiquinol-cytochrome c oxidoreductase (cytochrome b-c1 complex, complex III, CIII), resulting in different assemblies (supercomplex SCI(1)III(2)IV(1) and megacomplex MCI(2)III(2)IV(2)). Found in a complex with TMEM177, COA6, COX18, COX20, SCO1 and SCO2. Interacts with TMEM177 in a COX20-dependent manner. Interacts with COX20. Interacts with COX16. It depends on Cu cation as a cofactor.

The protein resides in the mitochondrion inner membrane. The catalysed reaction is 4 Fe(II)-[cytochrome c] + O2 + 8 H(+)(in) = 4 Fe(III)-[cytochrome c] + 2 H2O + 4 H(+)(out). Component of the cytochrome c oxidase, the last enzyme in the mitochondrial electron transport chain which drives oxidative phosphorylation. The respiratory chain contains 3 multisubunit complexes succinate dehydrogenase (complex II, CII), ubiquinol-cytochrome c oxidoreductase (cytochrome b-c1 complex, complex III, CIII) and cytochrome c oxidase (complex IV, CIV), that cooperate to transfer electrons derived from NADH and succinate to molecular oxygen, creating an electrochemical gradient over the inner membrane that drives transmembrane transport and the ATP synthase. Cytochrome c oxidase is the component of the respiratory chain that catalyzes the reduction of oxygen to water. Electrons originating from reduced cytochrome c in the intermembrane space (IMS) are transferred via the dinuclear copper A center (CU(A)) of subunit 2 and heme A of subunit 1 to the active site in subunit 1, a binuclear center (BNC) formed by heme A3 and copper B (CU(B)). The BNC reduces molecular oxygen to 2 water molecules using 4 electrons from cytochrome c in the IMS and 4 protons from the mitochondrial matrix. The sequence is that of Cytochrome c oxidase subunit 2 (MT-CO2) from Lophuromys flavopunctatus (Yellow-spotted brush-furred rat).